A 451-amino-acid polypeptide reads, in one-letter code: Chromosomal replication initiator protein DnaA (451 aa).

A domain I, interacts with DnaA modulators region spans residues 1–71 (MSEQEIWKKV…QTIMKDVIGY (71 aa)). The tract at residues 71 to 112 (YEVEPKFFTAEQLAELDETSRKSNTPSEPQRQIIEYGHEGTD) is domain II. Residues 113 to 329 (QFNTHNTFDT…GALTRLLAYS (217 aa)) are domain III, AAA+ region. ATP contacts are provided by Gly157, Gly159, Lys160, and Thr161. The segment at 330–451 (KLQGRPITTE…EDLEKEIRNQ (122 aa)) is domain IV, binds dsDNA.

This sequence belongs to the DnaA family. In terms of assembly, oligomerizes as a right-handed, spiral filament on DNA at oriC.

Its subcellular location is the cytoplasm. Plays an essential role in the initiation and regulation of chromosomal replication. ATP-DnaA binds to the origin of replication (oriC) to initiate formation of the DNA replication initiation complex once per cell cycle. Binds the DnaA box (a 9 base pair repeat at the origin) and separates the double-stranded (ds)DNA. Forms a right-handed helical filament on oriC DNA; dsDNA binds to the exterior of the filament while single-stranded (ss)DNA is stabiized in the filament's interior. The ATP-DnaA-oriC complex binds and stabilizes one strand of the AT-rich DNA unwinding element (DUE), permitting loading of DNA polymerase. After initiation quickly degrades to an ADP-DnaA complex that is not apt for DNA replication. Binds acidic phospholipids. This Staphylococcus haemolyticus (strain JCSC1435) protein is Chromosomal replication initiator protein DnaA.